A 2820-amino-acid polypeptide reads, in one-letter code: Neurofibromin (2820 aa).

The residue at position 2 (alanine 2) is an N-acetylalanine. Serine 866 and serine 878 each carry phosphoserine. Residues 1253 to 1463 (HLLYQLLWNM…DLARRFFLDI (211 aa)) enclose the Ras-GAP domain. A CRAL-TRIO domain is found at 1561-1719 (EKEEFKALKT…ATLALEEDLK (159 aa)). Residues 1561 to 1818 (EKEEFKALKT…RTRWELSQPD (258 aa)) form a lipid binding region. 2 positions are modified to phosphoserine: serine 2169 and serine 2448. The disordered stretch occupies residues 2457-2482 (YPIHHGDPSSRTLKETQPWSSPRGSE). Positions 2458 to 2470 (PIHHGDPSSRTLK) are enriched in basic and acidic residues. Position 2495 is a phosphothreonine (threonine 2495). Serine 2496, serine 2502, serine 2504, and serine 2524 each carry phosphoserine. The Bipartite nuclear localization signal motif lies at 2536 to 2552 (KRQEMESGITTPPKMRR). Threonine 2546 is modified (phosphothreonine). Phosphoserine is present on residues serine 2578, serine 2783, and serine 2798. The segment at 2768-2820 (TSQHSPGIDKENVELSPTTGHCNSGRTRHGSASQVQKQRSAGSFKRNSIKKIV) is disordered. Residues 2782–2808 (LSPTTGHCNSGRTRHGSASQVQKQRSA) show a composition bias toward polar residues.

As to quaternary structure, interacts with HTR6. Interacts with SPRED2. Post-translationally, ubiquitinated by RNF7/RBX2, leading to its degradation.

Its subcellular location is the nucleus. The protein resides in the nucleolus. The protein localises to the cell membrane. In terms of biological role, stimulates the GTPase activity of Ras. NF1 shows greater affinity for Ras GAP, but lower specific activity. May be a regulator of Ras activity. This Rattus norvegicus (Rat) protein is Neurofibromin (Nf1).